The chain runs to 291 residues: Tyrosine recombinase XerA (291 aa).

The 94-residue stretch at 9–102 (PESGDLYNAF…AVRRFLKWIN (94 aa)) folds into the Core-binding (CB) domain. The region spanning 115–279 (KEVKALDEIQ…VLDDLRNEYL (165 aa)) is the Tyr recombinase domain. Active-site residues include Arg-150, Lys-175, His-231, Arg-234, and His-257. Tyr-266 acts as the O-(3'-phospho-DNA)-tyrosine intermediate in catalysis.

It belongs to the 'phage' integrase family. XerA subfamily.

Its subcellular location is the cytoplasm. Its function is as follows. Site-specific tyrosine recombinase, which acts by catalyzing the cutting and rejoining of the recombining DNA molecules. Probably involved in the resolution of chromosome dimers. Binds to the dif site. The sequence is that of Tyrosine recombinase XerA from Saccharolobus solfataricus (strain ATCC 35092 / DSM 1617 / JCM 11322 / P2) (Sulfolobus solfataricus).